The chain runs to 214 residues: Coiled-coil domain-containing protein 169 (214 aa).

Positions S56–K138 form a coiled coil. The segment at M154–P214 is disordered. Composition is skewed to polar residues over residues T155–R166 and H185–A195.

This sequence belongs to the CCDC169 family.

This chain is Coiled-coil domain-containing protein 169 (Ccdc169), found in Mus musculus (Mouse).